The following is a 228-amino-acid chain: MADS-box transcription factor 22 (228 aa).

The MADS-box domain maps to 1 to 61; that stretch reads MARERREIKR…GKLSHFASSS (61 aa). The K-box domain occupies 86–176; sequence LNLEHSKYAH…RNQVSQISPA (91 aa). Positions 189 to 217 are disordered; that stretch reads EGQSSESVMTALHSGSSQSQDNDDGSDVS.

In terms of tissue distribution, expressed in palea and stamen primordia. Expressed in shoots and coleoptiles.

Its subcellular location is the nucleus. Its function is as follows. Probable transcription factor. May be required for spikelet (rice flower) development. Transcription factor that functions to support the MADS55 in its function as negative regulator of brassinosteroid signaling. In Oryza sativa subsp. japonica (Rice), this protein is MADS-box transcription factor 22 (MADS22).